The chain runs to 231 residues: 7-cyano-7-deazaguanine synthase (231 aa).

8–18 (FSGGQDSTTCL) is an ATP binding site. Residues cysteine 188, cysteine 197, cysteine 200, and cysteine 203 each contribute to the Zn(2+) site.

This sequence belongs to the QueC family. The cofactor is Zn(2+).

The catalysed reaction is 7-carboxy-7-deazaguanine + NH4(+) + ATP = 7-cyano-7-deazaguanine + ADP + phosphate + H2O + H(+). Its pathway is purine metabolism; 7-cyano-7-deazaguanine biosynthesis. Functionally, catalyzes the ATP-dependent conversion of 7-carboxy-7-deazaguanine (CDG) to 7-cyano-7-deazaguanine (preQ(0)). This is 7-cyano-7-deazaguanine synthase from Sodalis glossinidius (strain morsitans).